The chain runs to 113 residues: Hydrogenase maturation factor HypA (113 aa).

Position 2 (His2) interacts with Ni(2+). Zn(2+) contacts are provided by Cys73, Cys76, Cys89, and Cys92.

The protein belongs to the HypA/HybF family.

Involved in the maturation of [NiFe] hydrogenases. Required for nickel insertion into the metal center of the hydrogenase. This chain is Hydrogenase maturation factor HypA, found in Legionella pneumophila (strain Paris).